The sequence spans 452 residues: Ribosomal protein uS12 methylthiotransferase RimO (452 aa).

Positions Leu3 to Asp122 constitute an MTTase N-terminal domain. [4Fe-4S] cluster contacts are provided by Cys12, Cys48, Cys85, Cys162, Cys166, and Cys169. In terms of domain architecture, Radical SAM core spans Leu148–Glu392. The 58-residue stretch at Gln395–Glu452 folds into the TRAM domain.

The protein belongs to the methylthiotransferase family. RimO subfamily. [4Fe-4S] cluster serves as cofactor.

The protein resides in the cytoplasm. It carries out the reaction L-aspartate(89)-[ribosomal protein uS12]-hydrogen + (sulfur carrier)-SH + AH2 + 2 S-adenosyl-L-methionine = 3-methylsulfanyl-L-aspartate(89)-[ribosomal protein uS12]-hydrogen + (sulfur carrier)-H + 5'-deoxyadenosine + L-methionine + A + S-adenosyl-L-homocysteine + 2 H(+). Catalyzes the methylthiolation of an aspartic acid residue of ribosomal protein uS12. The chain is Ribosomal protein uS12 methylthiotransferase RimO from Akkermansia muciniphila (strain ATCC BAA-835 / DSM 22959 / JCM 33894 / BCRC 81048 / CCUG 64013 / CIP 107961 / Muc).